The chain runs to 78 residues: Acyl carrier protein (78 aa).

Residues 2 to 77 enclose the Carrier domain; the sequence is SDTAERVKKI…DAVKYIEKAT (76 aa). Serine 37 is subject to O-(pantetheine 4'-phosphoryl)serine.

It belongs to the acyl carrier protein (ACP) family. Post-translationally, 4'-phosphopantetheine is transferred from CoA to a specific serine of apo-ACP by AcpS. This modification is essential for activity because fatty acids are bound in thioester linkage to the sulfhydryl of the prosthetic group.

It localises to the cytoplasm. Its pathway is lipid metabolism; fatty acid biosynthesis. In terms of biological role, carrier of the growing fatty acid chain in fatty acid biosynthesis. This chain is Acyl carrier protein, found in Chelativorans sp. (strain BNC1).